Consider the following 568-residue polypeptide: MTTQSEYDYIIIGAGSAGNTLAARLTEDAGVTVLLLEAGGPDYRLDFRTQMPAALAFPLQGRRYNWAYETEPEPHMNNRRMECGRGKGLGGSSLINGMCYIRGNAMDYDGWAKEPGLEDWSYLDCLPYFRKAETRDIGPNDYHGGEGPVSVTKPKAGNNPLFHAMVEAGVQAGFPRTDDLNGYQQEGFGPMDRTVTPNGRRASTARGYLDEAKKRSTLTIVTHALTDRILFEGKRAVGVAYLVGDSDTRIQARARKEVLLCGGAIASPQILQRSGVGPAEVLNKLDIPVVHDLPGVGQNLQDHLEMYLQYACTQPVSLYPSLKWWNQPAIGAKWMFLGTGIGASNQFEAGGFIRSSEAFEWPNIQYHFLPVAINYNGTKGVQEHGFQAHVGSMRSPSRGRVQVKSKDPREYPSILFNYMSSEQDWQEFRDGIRLTREIMQQPALDPYRGREISPGIDVQSDEALDQFVREHAETAYHPSCSCKMGTDEMAVVDGQGRVHGLQSLRVVDASIMPIITTGNLNAPTIMIAEKIADKIRGRQPLPRSTADYFVAGDKPARGKPLREISHQA.

Position 8–37 (8–37 (DYIIIGAGSAGNTLAARLTEDAGVTVLLLE)) interacts with FAD. Histidine 477 (proton acceptor) is an active-site residue.

This sequence belongs to the GMC oxidoreductase family. It depends on FAD as a cofactor.

The enzyme catalyses choline + A = betaine aldehyde + AH2. It carries out the reaction betaine aldehyde + NAD(+) + H2O = glycine betaine + NADH + 2 H(+). Its pathway is amine and polyamine biosynthesis; betaine biosynthesis via choline pathway; betaine aldehyde from choline (cytochrome c reductase route): step 1/1. Functionally, involved in the biosynthesis of the osmoprotectant glycine betaine. Catalyzes the oxidation of choline to betaine aldehyde and betaine aldehyde to glycine betaine at the same rate. The sequence is that of Oxygen-dependent choline dehydrogenase from Pseudomonas savastanoi pv. phaseolicola (strain 1448A / Race 6) (Pseudomonas syringae pv. phaseolicola (strain 1448A / Race 6)).